The sequence spans 65 residues: Large ribosomal subunit protein bL35 (65 aa).

Residues 1 to 30 (MPKMKTNRGAAKRFRKTASGRFKSKQSHLR) form a disordered region. Basic residues predominate over residues 10–30 (AAKRFRKTASGRFKSKQSHLR).

The protein belongs to the bacterial ribosomal protein bL35 family.

In Pseudoalteromonas atlantica (strain T6c / ATCC BAA-1087), this protein is Large ribosomal subunit protein bL35.